The chain runs to 412 residues: Adherens junction-associated protein 1 (412 aa).

The N-terminal stretch at 1-43 (MWIQQLLGLSSMSIRWPGRSLGSHAWILIAMLQLAVDFPSCDS) is a signal peptide. Topologically, residues 44 to 284 (LGPGPEFRLL…GETSGLAVHQ (241 aa)) are extracellular. Disordered stretches follow at residues 62–175 (LWSL…GRPT) and 243–271 (DPWKRTPVGVSTTEPSTSPSSNGKDIQPP). The segment covering 121-146 (PPAATRSSPSLASATASSSIVTAGAA) has biased composition (low complexity). A compositionally biased stretch (basic and acidic residues) spans 160 to 171 (HDTEFNDFDFRG). Residues 248–263 (TPVGVSTTEPSTSPSS) are compositionally biased toward low complexity. A helical membrane pass occupies residues 285 to 305 (IITITVSLIMVIAALITTLVL). The segment at 305-412 (LKNCCAPSGH…VSEKWFEISC (108 aa)) is targeting signals. At 306–412 (KNCCAPSGHT…VSEKWFEISC (107 aa)) the chain is on the cytoplasmic side.

In terms of assembly, forms a complex with CDH1 and CTNNB1; interacts directly with CTNNB1. Interacts with AP1M2 and isoform 2 of BSG/CD147.

Its subcellular location is the basolateral cell membrane. The protein resides in the apical cell membrane. It is found in the cell junction. The protein localises to the adherens junction. Its function is as follows. Plays a role in cell adhesion and cell migration. This Mus musculus (Mouse) protein is Adherens junction-associated protein 1 (Ajap1).